The sequence spans 104 residues: uncharacterized protein (104 aa).

It belongs to the BolA/IbaG family.

This is an uncharacterized protein from Buchnera aphidicola subsp. Acyrthosiphon pisum (strain APS) (Acyrthosiphon pisum symbiotic bacterium).